The following is a 630-amino-acid chain: Angiotensin-converting enzyme-related protein (630 aa).

Residues 1-22 (MGACNITVLLLVIMLWLPHGLS) form the signal peptide. The Peptidase M2 domain maps to 28–615 (SASVLEARRF…SRLGVPLGWG (588 aa)). Cystine bridges form between Cys142/Cys150 and Cys344/Cys362. His375 is a Zn(2+) binding site. The active-site Proton acceptor is the Glu376. Zn(2+)-binding residues include His379 and Glu403. His505 (proton donor) is an active-site residue. Cys530 and Cys548 form a disulfide bridge.

Belongs to the peptidase M2 family. Zn(2+) is required as a cofactor. Glycosylated.

It localises to the secreted. The protein resides in the extracellular space. It carries out the reaction Release of a C-terminal dipeptide, oligopeptide-|-Xaa-Yaa, when Xaa is not Pro, and Yaa is neither Asp nor Glu. Thus, conversion of angiotensin I to angiotensin II, with increase in vasoconstrictor activity, but no action on angiotensin II.. Inhibited by captopril, lisinopril, trandolaprilat, fosinoprilat and enalaprilat. Functionally, may be involved in the specific maturation or degradation of a number of bioactive peptides. May have a role in the specification of heart progenitors. This is Angiotensin-converting enzyme-related protein (Acer) from Drosophila melanogaster (Fruit fly).